Here is a 402-residue protein sequence, read N- to C-terminus: Arginine deiminase (402 aa).

Cysteine 392 serves as the catalytic Amidino-cysteine intermediate.

Belongs to the arginine deiminase family.

It localises to the cytoplasm. The enzyme catalyses L-arginine + H2O = L-citrulline + NH4(+). It functions in the pathway amino-acid degradation; L-arginine degradation via ADI pathway; carbamoyl phosphate from L-arginine: step 1/2. This is Arginine deiminase from Mycolicibacterium gilvum (strain PYR-GCK) (Mycobacterium gilvum (strain PYR-GCK)).